The chain runs to 197 residues: MVKVGVIGLQGDVSEHIEAAQRALENLGVSGEVIWLKKPEQLEGISAIIIPGGESTTISRLMQKNGLLEPVRKLGEEGLPIMGTCAGLIMLSKEVIGATPEQRFLELLDVKVNRNAYGRQVDSFEAPVKLAFSDEPFPGVFIRAPRIVELLSDKVKPIAWLGDRVVGVEQDNLIGLEFHPELTEDTRVHEYFLRKAL.

53–55 is an L-glutamine binding site; it reads GES. Catalysis depends on cysteine 85, which acts as the Nucleophile. Residues arginine 114 and 142–143 each bind L-glutamine; that span reads IR. Catalysis depends on charge relay system residues histidine 179 and glutamate 181.

Belongs to the glutaminase PdxT/SNO family. In the presence of PdxS, forms a dodecamer of heterodimers. Only shows activity in the heterodimer.

It carries out the reaction aldehydo-D-ribose 5-phosphate + D-glyceraldehyde 3-phosphate + L-glutamine = pyridoxal 5'-phosphate + L-glutamate + phosphate + 3 H2O + H(+). The enzyme catalyses L-glutamine + H2O = L-glutamate + NH4(+). It participates in cofactor biosynthesis; pyridoxal 5'-phosphate biosynthesis. Functionally, catalyzes the hydrolysis of glutamine to glutamate and ammonia as part of the biosynthesis of pyridoxal 5'-phosphate. The resulting ammonia molecule is channeled to the active site of PdxS. This chain is Pyridoxal 5'-phosphate synthase subunit PdxT, found in Thermococcus gammatolerans (strain DSM 15229 / JCM 11827 / EJ3).